Here is a 396-residue protein sequence, read N- to C-terminus: Protein PIN-LIKES 5 (396 aa).

Over 1-5 (MGFWS) the chain is Lumenal. A helical membrane pass occupies residues 6–26 (LLEVASMPVIQVLFMSLVGAF). Topologically, residues 27-45 (MASDRCKLFPVEARNSMNK) are cytoplasmic. Residues 46–66 (VVFVLFAPALMFANLAQTVTL) form a helical membrane-spanning segment. Residues 67-73 (EDIISWW) are Lumenal-facing. A helical membrane pass occupies residues 74 to 94 (FMPVNMGLTFLIGGLLGWLVV). The Cytoplasmic portion of the chain corresponds to 95–106 (KILKPPPYLEGL). Residues 107–127 (IVATCSAGNMGNLPIILVPAI) form a helical membrane-spanning segment. Residues 128–144 (CDEDKSPFGNRSVCRTV) lie on the Lumenal side of the membrane. The chain crosses the membrane as a helical span at residues 145-165 (GLSYASFSMALGGFYIWTYTF). Over 166–229 (RLIKGSAMKV…WRKGVDFLHE (64 aa)) the chain is Cytoplasmic. The helical transmembrane segment at 230 to 250 (ILEELLAPPTLGAIIGFIFGA) threads the bilayer. At 251–273 (VRWLRNLIIGDDAPLRIVQSTAK) the chain is on the lumenal side. Residues 274 to 294 (LLGDGTIPCMTIILGGNLIQG) traverse the membrane as a helical segment. The Cytoplasmic portion of the chain corresponds to 295–312 (LRSSAVKPMVVLGIVCVR). The chain crosses the membrane as a helical span at residues 313–333 (YIAMPIIGIGIVLTAANLGFL). Over 334-337 (PADP) the chain is Lumenal. The helical transmembrane segment at 338-358 (LFQYVLMLQFTLPPAMNIGTM) threads the bilayer. Over 359-370 (TQLYNVAQDECS) the chain is Cytoplasmic. Residues 371 to 391 (VLMLWTYLVAILALTVWSTIF) traverse the membrane as a helical segment. Topologically, residues 392–396 (LHLLV) are lumenal.

It belongs to the auxin efflux carrier (TC 2.A.69.2) family. In terms of tissue distribution, expressed in seedlings, cauline leaves and flowers.

It is found in the endoplasmic reticulum membrane. Involved in cellular auxin homeostasis by regulating auxin metabolism. Regulates intracellular auxin accumulation at the endoplasmic reticulum and thus auxin availability for nuclear auxin signaling. This Arabidopsis thaliana (Mouse-ear cress) protein is Protein PIN-LIKES 5.